Consider the following 170-residue polypeptide: Acetyl-CoA decarbonylase/synthase complex subunit epsilon 2 (170 aa).

It belongs to the CdhB family. In terms of assembly, heterotetramer of two alpha and two epsilon subunits. The ACDS complex is made up of alpha, epsilon, beta, gamma and delta subunits with a probable stoichiometry of (alpha(2)epsilon(2))(4)-beta(8)-(gamma(1)delta(1))(8).

It participates in one-carbon metabolism; methanogenesis from acetate. Its function is as follows. Part of a complex that catalyzes the reversible cleavage of acetyl-CoA, allowing growth on acetate as sole source of carbon and energy. The alpha-epsilon subcomponent functions as a carbon monoxide dehydrogenase. The precise role of the epsilon subunit is unclear; it may have a stabilizing role within the alpha(2)epsilon(2) component and/or be involved in electron transfer to FAD during a potential FAD-mediated CO oxidation. The sequence is that of Acetyl-CoA decarbonylase/synthase complex subunit epsilon 2 (cdhB2) from Methanosarcina mazei (strain ATCC BAA-159 / DSM 3647 / Goe1 / Go1 / JCM 11833 / OCM 88) (Methanosarcina frisia).